The primary structure comprises 338 residues: S-adenosylmethionine:tRNA ribosyltransferase-isomerase (338 aa).

It belongs to the QueA family. Monomer.

It is found in the cytoplasm. The enzyme catalyses 7-aminomethyl-7-carbaguanosine(34) in tRNA + S-adenosyl-L-methionine = epoxyqueuosine(34) in tRNA + adenine + L-methionine + 2 H(+). It participates in tRNA modification; tRNA-queuosine biosynthesis. Functionally, transfers and isomerizes the ribose moiety from AdoMet to the 7-aminomethyl group of 7-deazaguanine (preQ1-tRNA) to give epoxyqueuosine (oQ-tRNA). This chain is S-adenosylmethionine:tRNA ribosyltransferase-isomerase, found in Francisella philomiragia subsp. philomiragia (strain ATCC 25017 / CCUG 19701 / FSC 153 / O#319-036).